The primary structure comprises 379 residues: Alcohol dehydrogenase 2 (379 aa).

Cysteine 48 lines the Zn(2+) pocket. NAD(+) is bound at residue 49–53; that stretch reads HTDML. The Zn(2+) site is built by histidine 69, cysteine 100, cysteine 103, cysteine 106, cysteine 114, and cysteine 178. NAD(+) contacts are provided by residues 203-208, aspartate 227, lysine 232, 275-277, 298-300, and 321-323; these read GLGAVG, TGI, IGA, and TTF.

Belongs to the zinc-containing alcohol dehydrogenase family. Class-IV subfamily. As to quaternary structure, homodimer. Zn(2+) is required as a cofactor. Expressed in flowers and disk florets.

The catalysed reaction is (R,R)-chrysanthemol + NAD(+) = (1R,3R)-chrysanthemal + NADH + H(+). It carries out the reaction nerol + NAD(+) = neral + NADH + H(+). It catalyses the reaction (S)-(-)-citronellol + NAD(+) = (S)-(-)-citronellal + NADH + H(+). The enzyme catalyses perillyl alcohol + NAD(+) = perillyl aldehyde + NADH + H(+). The catalysed reaction is (6E)-8-hydroxygeraniol + NAD(+) = (6E)-8-hydroxygeranial + NADH + H(+). It carries out the reaction (2E)-geraniol + NAD(+) = (2E)-geranial + NADH + H(+). Its pathway is isoprenoid biosynthesis. Component of the monoterpenoid pyrethrins biosynthesis; pyrethrins are widely used plant-derived pesticide. Mediates the conversion of trans-chrysanthemol into trans-chrysanthemal. This is Alcohol dehydrogenase 2 from Tanacetum cinerariifolium (Dalmatian daisy).